The sequence spans 101 residues: Small ribosomal subunit protein bS16 (101 aa).

It belongs to the bacterial ribosomal protein bS16 family.

The sequence is that of Small ribosomal subunit protein bS16 from Ureaplasma urealyticum serovar 10 (strain ATCC 33699 / Western).